We begin with the raw amino-acid sequence, 3120 residues long: DNA-directed RNA polymerase subunit beta'' (3120 aa).

Zn(2+) is bound by residues cysteine 323, cysteine 396, cysteine 403, and cysteine 406. The insert-1 stretch occupies residues 595–1130; it reads FIGEGKQNVL…LKTLVLKKWF (536 aa). An insert-2 region spans residues 1796–2346; sequence KGHLVAYARP…NGIIQAKSLL (551 aa). The interval 2422–2610 is insert-3; that stretch reads NSNFLENTHF…PEGEGEKDMT (189 aa). Residues 2726-2801 form an insert-4 region; it reads FSKKRWKKSI…KQNQTIILAL (76 aa). The insert-5 stretch occupies residues 2856–2996; that stretch reads ASKMSEYMFS…LNQLLSNNLD (141 aa). Residues 2926–2956 form a disordered region; the sequence is EGIDSSKIPSSNIPEGKVTQNNKRKSTRKNV. Residues 2932–2946 are compositionally biased toward polar residues; it reads KIPSSNIPEGKVTQN.

The protein belongs to the RNA polymerase beta' chain family. RpoC2 subfamily. In terms of assembly, in plastids the minimal PEP RNA polymerase catalytic core is composed of four subunits: alpha, beta, beta', and beta''. When a (nuclear-encoded) sigma factor is associated with the core the holoenzyme is formed, which can initiate transcription. Requires Zn(2+) as cofactor.

The protein localises to the plastid. Its subcellular location is the chloroplast. It carries out the reaction RNA(n) + a ribonucleoside 5'-triphosphate = RNA(n+1) + diphosphate. Functionally, DNA-dependent RNA polymerase catalyzes the transcription of DNA into RNA using the four ribonucleoside triphosphates as substrates. The sequence is that of DNA-directed RNA polymerase subunit beta'' from Chlamydomonas reinhardtii (Chlamydomonas smithii).